We begin with the raw amino-acid sequence, 726 residues long: Probable cadmium-transporting ATPase (726 aa).

An HMA domain is found at 11–74 (DKQVYRVEGF…AGAFENLKVF (64 aa)). Residues C22 and C25 each contribute to the Cd(2+) site. 5 helical membrane passes run 105-125 (STLL…FVNG), 129-149 (LVTS…LFKV), 163-179 (TLMT…GEWA), 335-355 (IIMV…GGSW), and 363-383 (LAVL…ISIV). D414 functions as the 4-aspartylphosphate intermediate in the catalytic mechanism. The next 2 helical transmembrane spans lie at 671-693 (LNII…LLVI) and 698-720 (TLWI…SLRL).

It belongs to the cation transport ATPase (P-type) (TC 3.A.3) family. Type IB subfamily.

The protein resides in the cell membrane. It carries out the reaction Cd(2+)(in) + ATP + H2O = Cd(2+)(out) + ADP + phosphate + H(+). Couples the hydrolysis of ATP with the export of cadmium. The chain is Probable cadmium-transporting ATPase (cadA) from Staphylococcus aureus (strain MRSA252).